Reading from the N-terminus, the 405-residue chain is Serpin H1 (405 aa).

The N-terminal stretch at 1–15 is a signal peptide; it reads MQIFLVLALCGLAAA. N107 and N112 each carry an N-linked (GlcNAc...) asparagine glycan. The short motif at 402–405 is the Prevents secretion from ER element; that stretch reads RDEL.

The protein belongs to the serpin family.

It localises to the endoplasmic reticulum lumen. Its function is as follows. Binds specifically to collagen. Could be involved as a chaperone in the biosynthetic pathway of collagen. The protein is Serpin H1 (SERPINH1) of Gallus gallus (Chicken).